The following is a 116-amino-acid chain: Putative iron-sulfur cluster insertion protein ErpA (116 aa).

Iron-sulfur cluster contacts are provided by Cys44, Cys108, and Cys110.

The protein belongs to the HesB/IscA family. Homodimer. Requires iron-sulfur cluster as cofactor.

In terms of biological role, required for insertion of 4Fe-4S clusters. This is Putative iron-sulfur cluster insertion protein ErpA from Azoarcus sp. (strain BH72).